The primary structure comprises 302 residues: Endochitinase 2 (302 aa).

Residues 1–42 (EQCGRQAGGALCPGGLCCSQFGWCGSTADYCTVPGCQSQCSG) enclose the Chitin-binding type-1 domain. 7 disulfides stabilise this stretch: Cys3/Cys18, Cys12/Cys24, Cys17/Cys31, Cys36/Cys40, Cys73/Cys136, Cys148/Cys156, and Cys255/Cys287. Glu117 acts as the Proton donor in catalysis. A propeptide spans 296 to 302 (GVSVDSM) (removed in mature form).

This sequence belongs to the glycosyl hydrolase 19 family. Chitinase class I subfamily.

The catalysed reaction is Random endo-hydrolysis of N-acetyl-beta-D-glucosaminide (1-&gt;4)-beta-linkages in chitin and chitodextrins.. Its function is as follows. Defense against chitin-containing fungal pathogens. In Gossypium hirsutum (Upland cotton), this protein is Endochitinase 2.